The following is a 183-amino-acid chain: uncharacterized protein (183 aa).

Positions 1–36 (MAKRGNKKKQEAPLSLGKHTVGGRVGKPTNAKTGSA) are disordered. The RRM domain maps to 100–174 (TNVVIENLAP…FKLSCYIKKN (75 aa)).

It localises to the nucleus. The protein resides in the nucleolus. This is an uncharacterized protein from Schizosaccharomyces pombe (strain 972 / ATCC 24843) (Fission yeast).